An 841-amino-acid chain; its full sequence is Phosphatidylglycerol lysyltransferase (841 aa).

The Cytoplasmic portion of the chain corresponds to 1-8; it reads MTKELRSK. The chain crosses the membrane as a helical span at residues 9–29; that stretch reads LFTILKIAFALTLFTIVAITL. Topologically, residues 30–52 are extracellular; sequence YKELSHINLKDAIKSFSKINRFW. The helical transmembrane segment at 53-73 threads the bilayer; that stretch reads LVALFLSGGASIIVLSIYDVI. Residues 74–89 lie on the Cytoplasmic side of the membrane; that stretch reads LAKTLKLKIGLAKTIR. The helical transmembrane segment at 90-110 threads the bilayer; that stretch reads IGYIVNALNAVVGFGGFIGAS. Topologically, residues 111–129 are extracellular; sequence VRFLFYKNTTDDKKALFHT. Residues 130-150 form a helical membrane-spanning segment; that stretch reads ISIVLISMLTGLSLLSILVVI. The Cytoplasmic portion of the chain corresponds to 151–164; the sequence is HVFDISHIFTPYPW. A helical membrane pass occupies residues 165–185; the sequence is VKWLMYVVALFLPIFVVFTII. The Extracellular portion of the chain corresponds to 186–193; sequence KPVQKTHR. Residues 194-216 traverse the membrane as a helical segment; it reads LLGVYCTIVSGVEWFVAALVLYM. Residues 217–229 are Cytoplasmic-facing; it reads SMAIVGVQIPFAT. A helical membrane pass occupies residues 230–250; sequence FMGIFILAALSGLISFIPGGF. The Extracellular portion of the chain corresponds to 251 to 270; sequence GTFDLVVLLGLKALNVNEEA. The chain crosses the membrane as a helical span at residues 271 to 291; the sequence is IVLGLSLYRFAYYLFPVLIAL. The Cytoplasmic segment spans residues 292–336; that stretch reads ILSTFEFRSTAKRYWEDSRILVPVKDMTSLLGSYQKDIIARIPSF. Residues 337-357 traverse the membrane as a helical segment; that stretch reads AIALLLLFTSLVFFLNNLTII. Residues 358 to 367 lie on the Extracellular side of the membrane; sequence YDGLYDPNHY. The chain crosses the membrane as a helical span at residues 368–388; the sequence is IYYIIVSIHTCACLLLLLNVI. At 389–392 the chain is on the cytoplasmic side; sequence GVYK. Residues 393–413 traverse the membrane as a helical segment; sequence LSKRAILFSIISVLFIFIATA. Topologically, residues 414 to 415 are extracellular; it reads YT. The chain crosses the membrane as a helical span at residues 416–436; the sequence is YASFILLSWLTVIFILLLVFY. Over 437 to 448 the chain is Cytoplasmic; it reads RRARVIKRPFRY. A helical transmembrane segment spans residues 449-469; the sequence is SKLLLSVITGAIILYINHLVI. Residues 470–489 are Extracellular-facing; sequence KSTFYSLEIYHIEMLTSILR. A helical membrane pass occupies residues 490–510; it reads YYFWITILLVAIIVGVIVWWF. The Cytoplasmic segment spans residues 511-841; sequence EYRYRSSNSR…KVMRVIRKNN (331 aa).

The protein belongs to the LPG synthase family.

The protein resides in the cell membrane. The enzyme catalyses L-lysyl-tRNA(Lys) + a 1,2-diacyl-sn-glycero-3-phospho-(1'-sn-glycerol) = a 1,2-diacyl-sn-glycero-3-phospho-1'-(3'-O-L-lysyl)-sn-glycerol + tRNA(Lys). In terms of biological role, catalyzes the transfer of a lysyl group from L-lysyl-tRNA(Lys) to membrane-bound phosphatidylglycerol (PG), which produces lysylphosphatidylglycerol (LPG), a major component of the bacterial membrane with a positive net charge. LPG synthesis contributes to bacterial virulence as it is involved in the resistance mechanism against cationic antimicrobial peptides (CAMP) produces by the host's immune system (defensins, cathelicidins) and by the competing microorganisms (bacteriocins). In fact, the modification of anionic phosphatidylglycerol with positively charged L-lysine results in repulsion of the peptides. This chain is Phosphatidylglycerol lysyltransferase (mprF), found in Staphylococcus xylosus.